The chain runs to 508 residues: ATP synthase subunit alpha, chloroplastic (508 aa).

172–179 (GDRQTGKT) contributes to the ATP binding site.

Belongs to the ATPase alpha/beta chains family. F-type ATPases have 2 components, CF(1) - the catalytic core - and CF(0) - the membrane proton channel. CF(1) has five subunits: alpha(3), beta(3), gamma(1), delta(1), epsilon(1). CF(0) has four main subunits: a, b, b' and c.

The protein resides in the plastid. Its subcellular location is the chloroplast thylakoid membrane. It carries out the reaction ATP + H2O + 4 H(+)(in) = ADP + phosphate + 5 H(+)(out). In terms of biological role, produces ATP from ADP in the presence of a proton gradient across the membrane. The alpha chain is a regulatory subunit. This is ATP synthase subunit alpha, chloroplastic from Psilotum nudum (Whisk fern).